A 265-amino-acid polypeptide reads, in one-letter code: Hemin import ATP-binding protein HmuV (265 aa).

Residues 10–247 (LVARHLRFQT…ETLAHWYRAD (238 aa)) enclose the ABC transporter domain. An ATP-binding site is contributed by 42 to 49 (GPNGAGKS).

It belongs to the ABC transporter superfamily. Heme (hemin) importer (TC 3.A.1.14.5) family. The complex is composed of two ATP-binding proteins (HmuV), two transmembrane proteins (HmuU) and a solute-binding protein (HmuT).

The protein localises to the cell inner membrane. In terms of biological role, part of the ABC transporter complex HmuTUV involved in hemin import. Responsible for energy coupling to the transport system. This Pectobacterium atrosepticum (strain SCRI 1043 / ATCC BAA-672) (Erwinia carotovora subsp. atroseptica) protein is Hemin import ATP-binding protein HmuV.